Reading from the N-terminus, the 497-residue chain is Acetyl-coenzyme A carboxylase carboxyl transferase subunit beta, chloroplastic (497 aa).

The CoA carboxyltransferase N-terminal domain maps to 225-497; it reads LWVQCENCYG…LHGFLPLNQD (273 aa). Positions 229, 232, 248, and 251 each coordinate Zn(2+). The C4-type zinc finger occupies 229 to 251; it reads CENCYGLNYKKFFSSKMNICEYC.

This sequence belongs to the AccD/PCCB family. In terms of assembly, acetyl-CoA carboxylase is a heterohexamer composed of biotin carboxyl carrier protein, biotin carboxylase and 2 subunits each of ACCase subunit alpha and ACCase plastid-coded subunit beta (accD). The cofactor is Zn(2+).

It is found in the plastid. It localises to the chloroplast stroma. It carries out the reaction N(6)-carboxybiotinyl-L-lysyl-[protein] + acetyl-CoA = N(6)-biotinyl-L-lysyl-[protein] + malonyl-CoA. It functions in the pathway lipid metabolism; malonyl-CoA biosynthesis; malonyl-CoA from acetyl-CoA: step 1/1. Functionally, component of the acetyl coenzyme A carboxylase (ACC) complex. Biotin carboxylase (BC) catalyzes the carboxylation of biotin on its carrier protein (BCCP) and then the CO(2) group is transferred by the transcarboxylase to acetyl-CoA to form malonyl-CoA. This Phalaenopsis aphrodite subsp. formosana (Moth orchid) protein is Acetyl-coenzyme A carboxylase carboxyl transferase subunit beta, chloroplastic.